The following is a 573-amino-acid chain: Potassium-transporting ATPase potassium-binding subunit (573 aa).

10 consecutive transmembrane segments (helical) span residues 6–26, 66–86, 135–155, 177–197, 257–277, 283–303, 382–402, 428–448, 493–513, and 537–557; these read ILFALFIVTIALITKPLGSYI, FFSLVSFSVMAFIFVLVILLL, ALAVQNFVSAAVGLCVAIALI, IFWILLPISIVIAIVYIFQGV, IQMVSIFAIAAALTYTFGKWV, GWLIFGVMLVLFIISLVVMTI, IFGGVGAGFYGFFMFLMLAVF, MFALLISPCCVLVFTGLAAVI, ITIALSMLIGRFGVIFAVIML, and FIFAILVFFTILLIGGLTIFP.

This sequence belongs to the KdpA family. As to quaternary structure, the system is composed of three essential subunits: KdpA, KdpB and KdpC.

It is found in the cell inner membrane. In terms of biological role, part of the high-affinity ATP-driven potassium transport (or Kdp) system, which catalyzes the hydrolysis of ATP coupled with the electrogenic transport of potassium into the cytoplasm. This subunit binds the periplasmic potassium ions and delivers the ions to the membrane domain of KdpB through an intramembrane tunnel. The protein is Potassium-transporting ATPase potassium-binding subunit of Francisella tularensis subsp. novicida (strain U112).